The primary structure comprises 94 residues: Integration host factor subunit beta (94 aa).

It belongs to the bacterial histone-like protein family. In terms of assembly, heterodimer of an alpha and a beta chain.

In terms of biological role, this protein is one of the two subunits of integration host factor, a specific DNA-binding protein that functions in genetic recombination as well as in transcriptional and translational control. The protein is Integration host factor subunit beta of Yersinia enterocolitica serotype O:8 / biotype 1B (strain NCTC 13174 / 8081).